Here is a 216-residue protein sequence, read N- to C-terminus: Elongation factor Ts (216 aa).

The interval 81 to 84 (TDFV) is involved in Mg(2+) ion dislocation from EF-Tu.

The protein belongs to the EF-Ts family.

Its subcellular location is the cytoplasm. Its function is as follows. Associates with the EF-Tu.GDP complex and induces the exchange of GDP to GTP. It remains bound to the aminoacyl-tRNA.EF-Tu.GTP complex up to the GTP hydrolysis stage on the ribosome. This Geotalea uraniireducens (strain Rf4) (Geobacter uraniireducens) protein is Elongation factor Ts.